Consider the following 426-residue polypeptide: Histidine--tRNA ligase (426 aa).

It belongs to the class-II aminoacyl-tRNA synthetase family. Homodimer.

The protein localises to the cytoplasm. It catalyses the reaction tRNA(His) + L-histidine + ATP = L-histidyl-tRNA(His) + AMP + diphosphate + H(+). The protein is Histidine--tRNA ligase of Geobacillus kaustophilus (strain HTA426).